The chain runs to 314 residues: Lipoyl synthase (314 aa).

[4Fe-4S] cluster is bound by residues Cys40, Cys45, Cys51, Cys67, Cys71, Cys74, and Ser280. The 217-residue stretch at 53-269 (SERKTATFMI…KNIALEKGFS (217 aa)) folds into the Radical SAM core domain.

This sequence belongs to the radical SAM superfamily. Lipoyl synthase family. Requires [4Fe-4S] cluster as cofactor.

Its subcellular location is the cytoplasm. The enzyme catalyses [[Fe-S] cluster scaffold protein carrying a second [4Fe-4S](2+) cluster] + N(6)-octanoyl-L-lysyl-[protein] + 2 oxidized [2Fe-2S]-[ferredoxin] + 2 S-adenosyl-L-methionine + 4 H(+) = [[Fe-S] cluster scaffold protein] + N(6)-[(R)-dihydrolipoyl]-L-lysyl-[protein] + 4 Fe(3+) + 2 hydrogen sulfide + 2 5'-deoxyadenosine + 2 L-methionine + 2 reduced [2Fe-2S]-[ferredoxin]. It participates in protein modification; protein lipoylation via endogenous pathway; protein N(6)-(lipoyl)lysine from octanoyl-[acyl-carrier-protein]. Its function is as follows. Catalyzes the radical-mediated insertion of two sulfur atoms into the C-6 and C-8 positions of the octanoyl moiety bound to the lipoyl domains of lipoate-dependent enzymes, thereby converting the octanoylated domains into lipoylated derivatives. In Oceanobacillus iheyensis (strain DSM 14371 / CIP 107618 / JCM 11309 / KCTC 3954 / HTE831), this protein is Lipoyl synthase.